We begin with the raw amino-acid sequence, 426 residues long: Dihydroorotase (426 aa).

Positions 61 and 63 each coordinate Zn(2+). Substrate contacts are provided by residues 63–65 (HCR) and asparagine 95. Positions 146, 180, 229, and 297 each coordinate Zn(2+). Aspartate 297 is an active-site residue. Histidine 301 is a binding site for substrate.

The protein belongs to the metallo-dependent hydrolases superfamily. DHOase family. Class I DHOase subfamily. Zn(2+) is required as a cofactor.

It catalyses the reaction (S)-dihydroorotate + H2O = N-carbamoyl-L-aspartate + H(+). Its pathway is pyrimidine metabolism; UMP biosynthesis via de novo pathway; (S)-dihydroorotate from bicarbonate: step 3/3. Catalyzes the reversible cyclization of carbamoyl aspartate to dihydroorotate. The sequence is that of Dihydroorotase from Methanopyrus kandleri (strain AV19 / DSM 6324 / JCM 9639 / NBRC 100938).